Consider the following 468-residue polypeptide: Hydroxymethylglutaryl-CoA synthase B (468 aa).

Glutamate 85 (proton donor/acceptor) is an active-site residue. Cysteine 119 functions as the Acyl-thioester intermediate in the catalytic mechanism. The (3S)-3-hydroxy-3-methylglutaryl-CoA site is built by cysteine 119, threonine 161, serine 211, histidine 250, lysine 259, asparagine 327, and serine 359. Catalysis depends on histidine 250, which acts as the Proton donor/acceptor.

It belongs to the thiolase-like superfamily. HMG-CoA synthase family.

It catalyses the reaction acetoacetyl-CoA + acetyl-CoA + H2O = (3S)-3-hydroxy-3-methylglutaryl-CoA + CoA + H(+). It participates in metabolic intermediate biosynthesis; (R)-mevalonate biosynthesis; (R)-mevalonate from acetyl-CoA: step 2/3. Condenses acetyl-CoA with acetoacetyl-CoA to form HMG-CoA, which is the substrate for HMG-CoA reductase. The polypeptide is Hydroxymethylglutaryl-CoA synthase B (hgsB) (Dictyostelium discoideum (Social amoeba)).